A 205-amino-acid chain; its full sequence is N-(5'-phosphoribosyl)anthranilate isomerase (205 aa).

This sequence belongs to the TrpF family.

It carries out the reaction N-(5-phospho-beta-D-ribosyl)anthranilate = 1-(2-carboxyphenylamino)-1-deoxy-D-ribulose 5-phosphate. Its pathway is amino-acid biosynthesis; L-tryptophan biosynthesis; L-tryptophan from chorismate: step 3/5. The chain is N-(5'-phosphoribosyl)anthranilate isomerase from Acidithiobacillus ferrooxidans (strain ATCC 23270 / DSM 14882 / CIP 104768 / NCIMB 8455) (Ferrobacillus ferrooxidans (strain ATCC 23270)).